We begin with the raw amino-acid sequence, 195 residues long: Imidazoleglycerol-phosphate dehydratase (195 aa).

It belongs to the imidazoleglycerol-phosphate dehydratase family.

The protein resides in the cytoplasm. The enzyme catalyses D-erythro-1-(imidazol-4-yl)glycerol 3-phosphate = 3-(imidazol-4-yl)-2-oxopropyl phosphate + H2O. It participates in amino-acid biosynthesis; L-histidine biosynthesis; L-histidine from 5-phospho-alpha-D-ribose 1-diphosphate: step 6/9. The chain is Imidazoleglycerol-phosphate dehydratase from Heliobacterium modesticaldum (strain ATCC 51547 / Ice1).